The sequence spans 158 residues: UPF0716 protein FxsA (158 aa).

Topologically, residues 1–16 are cytoplasmic; that stretch reads MRWLPFIAIFLYVYIE. Residues 17–37 traverse the membrane as a helical segment; sequence ISIFIQVAHVLGVLLTLVLVI. The Periplasmic segment spans residues 38–78; it reads FTSVIGMSLVRNQGFKNFVLMQQKMAAGENPAAEMIKSVSL. A helical membrane pass occupies residues 79–99; the sequence is IIAGLLLLLPGFFTDFLGLLL. The Cytoplasmic portion of the chain corresponds to 100-158; it reads LLPPVQKHLTVKLMPHLRFSRMPGGGFSAGTGGGNTFDGEYQRKDDERDRLDHKDDRQD. Residues 125-135 show a composition bias toward gly residues; that stretch reads GFSAGTGGGNT. The segment at 125-158 is disordered; it reads GFSAGTGGGNTFDGEYQRKDDERDRLDHKDDRQD. The span at 139-158 shows a compositional bias: basic and acidic residues; the sequence is EYQRKDDERDRLDHKDDRQD.

This sequence belongs to the UPF0716 (FxsA) family.

The protein localises to the cell inner membrane. Functionally, overexpression alleviates the exclusion of phage T7 in cells harboring the F plasmid. The protein is UPF0716 protein FxsA (fxsA) of Escherichia coli (strain K12).